The sequence spans 275 residues: Erythroagglutinating phytohemagglutinin (275 aa).

The signal sequence occupies residues 1–21 (MASSNLLSLALFLVLLTHANS). Asparagine 33 carries N-linked (GlcNAc...) (high mannose) asparagine glycosylation. 2 N-linked (GlcNAc...) asparagine glycosylation sites follow: asparagine 81 and asparagine 101.

It belongs to the leguminous lectin family.

Functionally, this insecticidal carbohydrate-binding lectin is toxic for the cowpea weevil. The polypeptide is Erythroagglutinating phytohemagglutinin (DLEC1) (Phaseolus vulgaris (Kidney bean)).